A 200-amino-acid chain; its full sequence is A-type ATP synthase subunit E (200 aa).

This sequence belongs to the V-ATPase E subunit family. In terms of assembly, has multiple subunits with at least A(3), B(3), C, D, E, F, H, I and proteolipid K(x).

The protein localises to the cell membrane. In terms of biological role, component of the A-type ATP synthase that produces ATP from ADP in the presence of a proton gradient across the membrane. The sequence is that of A-type ATP synthase subunit E from Aeropyrum pernix (strain ATCC 700893 / DSM 11879 / JCM 9820 / NBRC 100138 / K1).